The chain runs to 382 residues: Lipid-A-disaccharide synthase (382 aa).

It belongs to the LpxB family.

It catalyses the reaction 2-N,3-O-bis[(3R)-3-hydroxytetradecanoyl]-alpha-D-glucosaminyl 1-phosphate + UDP-2-N,3-O-bis[(3R)-3-hydroxytetradecanoyl]-alpha-D-glucosamine = lipid A disaccharide (E. coli) + UDP + H(+). It carries out the reaction a lipid X + a UDP-2-N,3-O-bis[(3R)-3-hydroxyacyl]-alpha-D-glucosamine = a lipid A disaccharide + UDP + H(+). Its pathway is glycolipid biosynthesis; lipid IV(A) biosynthesis; lipid IV(A) from (3R)-3-hydroxytetradecanoyl-[acyl-carrier-protein] and UDP-N-acetyl-alpha-D-glucosamine: step 5/6. Functionally, condensation of UDP-2,3-diacylglucosamine and 2,3-diacylglucosamine-1-phosphate to form lipid A disaccharide, a precursor of lipid A, a phosphorylated glycolipid that anchors the lipopolysaccharide to the outer membrane of the cell. The polypeptide is Lipid-A-disaccharide synthase (Escherichia coli O8 (strain IAI1)).